The sequence spans 557 residues: Formate--tetrahydrofolate ligase (557 aa).

65-72 (TPAGEGKT) is an ATP binding site.

It belongs to the formate--tetrahydrofolate ligase family. In terms of assembly, homotetramer.

It carries out the reaction (6S)-5,6,7,8-tetrahydrofolate + formate + ATP = (6R)-10-formyltetrahydrofolate + ADP + phosphate. It participates in one-carbon metabolism; tetrahydrofolate interconversion. The chain is Formate--tetrahydrofolate ligase (fhs) from Methylorubrum extorquens (strain ATCC 14718 / DSM 1338 / JCM 2805 / NCIMB 9133 / AM1) (Methylobacterium extorquens).